The primary structure comprises 127 residues: Putative lipoprotein LprJ (127 aa).

Residues methionine 1–serine 34 form the signal peptide. Cysteine 35 is lipidated: N-palmitoyl cysteine. Cysteine 35 carries S-diacylglycerol cysteine lipidation. Topologically, residues cysteine 35 to aspartate 99 are extracellular. Residues methionine 100–leucine 120 form a helical membrane-spanning segment. At methionine 121–alanine 127 the chain is on the cytoplasmic side.

As to quaternary structure, may interact with sensor protein KdpD. Post-translationally, modified by Lgt on Cys-35 with an S-linked diacylglycerol, signal peptide is removed by LspA, modified by Lnt with amide-linked fatty acid.

It is found in the cell membrane. Overexpression induces expression of sensor protein kdpD gene at low K(+) concentrations (0 and 250 uM, tested in M.smegatis). In Mycobacterium tuberculosis (strain ATCC 25618 / H37Rv), this protein is Putative lipoprotein LprJ (lprJ).